Here is a 777-residue protein sequence, read N- to C-terminus: 1,4-alpha-glucan branching enzyme GlgB (777 aa).

Catalysis depends on aspartate 408, which acts as the Nucleophile. Glutamate 461 (proton donor) is an active-site residue.

It belongs to the glycosyl hydrolase 13 family. GlgB subfamily. In terms of assembly, monomer.

The catalysed reaction is Transfers a segment of a (1-&gt;4)-alpha-D-glucan chain to a primary hydroxy group in a similar glucan chain.. Its pathway is glycan biosynthesis; glycogen biosynthesis. Functionally, catalyzes the formation of the alpha-1,6-glucosidic linkages in glycogen by scission of a 1,4-alpha-linked oligosaccharide from growing alpha-1,4-glucan chains and the subsequent attachment of the oligosaccharide to the alpha-1,6 position. This chain is 1,4-alpha-glucan branching enzyme GlgB, found in Actinobacillus pleuropneumoniae serotype 3 (strain JL03).